Consider the following 874-residue polypeptide: Alanine--tRNA ligase (874 aa).

Zn(2+) is bound by residues His-564, His-568, Cys-665, and His-669.

This sequence belongs to the class-II aminoacyl-tRNA synthetase family. It depends on Zn(2+) as a cofactor.

It is found in the cytoplasm. It catalyses the reaction tRNA(Ala) + L-alanine + ATP = L-alanyl-tRNA(Ala) + AMP + diphosphate. Functionally, catalyzes the attachment of alanine to tRNA(Ala) in a two-step reaction: alanine is first activated by ATP to form Ala-AMP and then transferred to the acceptor end of tRNA(Ala). Also edits incorrectly charged Ser-tRNA(Ala) and Gly-tRNA(Ala) via its editing domain. This chain is Alanine--tRNA ligase, found in Burkholderia cenocepacia (strain HI2424).